Here is a 67-residue protein sequence, read N- to C-terminus: uncharacterized protein (67 aa).

The stretch at 17-47 (AASLQELEKKINTQIENNKAIMLRVKSVSHQ) forms a coiled coil.

This is an uncharacterized protein from Bacillus subtilis (strain 168).